A 176-amino-acid chain; its full sequence is NAD(P)H-quinone oxidoreductase subunit 6, chloroplastic (176 aa).

5 helical membrane passes run 10-30, 33-53, 60-80, 95-115, and 152-172; these read ILML…VLLT, IYSA…YFLL, VAQL…AVMF, IGDG…MTTI, and FYLP…GAIT.

Belongs to the complex I subunit 6 family. As to quaternary structure, NDH is composed of at least 16 different subunits, 5 of which are encoded in the nucleus.

The protein localises to the plastid. Its subcellular location is the chloroplast thylakoid membrane. The enzyme catalyses a plastoquinone + NADH + (n+1) H(+)(in) = a plastoquinol + NAD(+) + n H(+)(out). It carries out the reaction a plastoquinone + NADPH + (n+1) H(+)(in) = a plastoquinol + NADP(+) + n H(+)(out). Its function is as follows. NDH shuttles electrons from NAD(P)H:plastoquinone, via FMN and iron-sulfur (Fe-S) centers, to quinones in the photosynthetic chain and possibly in a chloroplast respiratory chain. The immediate electron acceptor for the enzyme in this species is believed to be plastoquinone. Couples the redox reaction to proton translocation, and thus conserves the redox energy in a proton gradient. This is NAD(P)H-quinone oxidoreductase subunit 6, chloroplastic (ndhG) from Triticum aestivum (Wheat).